A 599-amino-acid chain; its full sequence is MSDLSHIRNFSIIAHIDHGKSTLADRFIQMCGGLSAREMEAQVLDSMDLERERGITIKAHSVTLHYKALDGKTYQLNFIDTPGHVDFTYEVSRSLAACEGALLVVDAGQGVEAQSVANCYTAIEQGLEVMPVLNKMDLPQADPDRVKDEIEKIIGIDATDAVACSAKSGMGVDEVLERLVHTIPAPVGEIDAPLQALIIDSWFDNYLGVVSLVRVRQGRVKKGDKILVKSTGKVHLVDSVGVFTPKHTQTADLKAGEVGFIIASIKDIHGAPVGDTLTLSSTPEVEMLAGFKKIQPQVYAGLFPVSSDDFEDFRDALQKLTLNDSSLQYMPESSDALGFGFRCGFLGMLHMEIIQERLEREYDLDLITTAPSVIYELELKTGETIVVDNPSKLPDVSSVTDFREPIVTATILVPQEHLGNVITLCIEKRGVQRDMQFLGSQVQVRYDMPMNEVVLDFFDRLKSTSRGYASLDYHFDRYQSANLVKLDVLINGDKVDALALIVHRDNAAYKGRALTEKMKELIPRQMFDVAIQAAIGGQIIARTTVKALRKNVLAKCYGGDVSRKKKLLEKQKAGKKRMKQVGNVEIPQEAFLAVLRLDS.

The tr-type G domain occupies 5–187 (SHIRNFSIIA…RLVHTIPAPV (183 aa)). GTP contacts are provided by residues 17 to 22 (DHGKST) and 134 to 137 (NKMD).

The protein belongs to the TRAFAC class translation factor GTPase superfamily. Classic translation factor GTPase family. LepA subfamily.

Its subcellular location is the cell inner membrane. The enzyme catalyses GTP + H2O = GDP + phosphate + H(+). Its function is as follows. Required for accurate and efficient protein synthesis under certain stress conditions. May act as a fidelity factor of the translation reaction, by catalyzing a one-codon backward translocation of tRNAs on improperly translocated ribosomes. Back-translocation proceeds from a post-translocation (POST) complex to a pre-translocation (PRE) complex, thus giving elongation factor G a second chance to translocate the tRNAs correctly. Binds to ribosomes in a GTP-dependent manner. The chain is Elongation factor 4 from Pseudomonas putida (strain W619).